We begin with the raw amino-acid sequence, 252 residues long: Fructose-1,6-bisphosphatase/inositol-1-monophosphatase (252 aa).

The Mg(2+) site is built by Asp38, Thr40, Glu67, Asp82, Leu84, and Asp85. Substrate is bound by residues 85–87 (DGT), Arg167, Ala172, and Arg191. Mg(2+) is bound at residue Asp200.

It belongs to the inositol monophosphatase superfamily. FBPase class 4 family. In terms of assembly, homodimer. It depends on Mg(2+) as a cofactor. The cofactor is Mn(2+).

The catalysed reaction is beta-D-fructose 1,6-bisphosphate + H2O = beta-D-fructose 6-phosphate + phosphate. It carries out the reaction a myo-inositol phosphate + H2O = myo-inositol + phosphate. With respect to regulation, both FBPase and IMPase activities are inhibited by Ca(2+). In contrast to mammalian I-1-P phosphatases, is only very weakly inhibited by Li(+) (with an IC(50) of about 290 mM). In terms of biological role, phosphatase with broad specificity; it can dephosphorylate fructose 1,6-bisphosphate, both D and L isomers of inositol-1-phosphate (I-1-P), 2'-AMP, pNPP, inositol-2-phosphate, beta-glycerol phosphate, and alpha-D-glucose-1-phosphate. Cannot hydrolyze glucose-6-phosphate and fructose-6-phosphate. May be involved in the biosynthesis of a unique osmolyte, di-myo-inositol 1,1-phosphate. This chain is Fructose-1,6-bisphosphatase/inositol-1-monophosphatase (suhB), found in Archaeoglobus fulgidus (strain ATCC 49558 / DSM 4304 / JCM 9628 / NBRC 100126 / VC-16).